The chain runs to 247 residues: uncharacterized protein (247 aa).

The next 6 helical transmembrane spans lie at 19 to 39 (IFFT…SIMF), 73 to 93 (FFTS…AFFI), 106 to 126 (FLSF…YFII), 155 to 175 (YIQF…CPLF), 196 to 216 (YIYF…ILSQ), and 217 to 237 (FFLF…SCFY).

Belongs to the TatC family.

It is found in the mitochondrion membrane. This is an uncharacterized protein from Nephroselmis olivacea (Green alga).